Consider the following 587-residue polypeptide: MPTALCPRVLAPKESEEPRKMRSPPGENPSPQGELPSPESSRRLFRRFRYQEAAGPREALQRLWDLCGGWLRPERHTKEQILELLVLEQFLAILPREIQSWVRAQEPESGEQAVAAVEALEREPGRPWQWLKHCEDPVVIDDGDSPLDQEQEQLPVEPHSDLAKNQDAQPITLAQCLGLPSRPPSQLSGDPVLQDAFLLQEENVRDTQQVTTLQLPPSRVSPFKDMILCFSEEDWSLLDPAQTGFYGEFIIGEDYGVSMPPNDLAAQPDLSQGEENEPRVPELQDLQGKEVPQVSYLDSPSLQPFQVEERRKREELQVPEFQACPQTVVPQNTYPAGGNPRSLENSLDEEVTIEIVLSSSGDEDSQHGPYCTEELGSPTEKQRSLPASHRSSTEAGGEVQTSKKSYVCPNCGKIFRWRVNFIRHLRSRREQEKPHECSVCGELFSDSEDLDGHLESHEAQKPYRCGACGKSFRLNSHLLSHRRIHLQPDRLQPVEKREQAASEDADKGPKEPLENGKAKLSFQCCECGKAFQRHDHLARHRSHFHLKDKARPFQCRYCVKSFTQNYDLLRHERLHMKRRSKQALNSY.

The disordered stretch occupies residues 1–40; that stretch reads MPTALCPRVLAPKESEEPRKMRSPPGENPSPQGELPSPES. A compositionally biased stretch (basic and acidic residues) spans 11-20; the sequence is APKESEEPRK. Lysine 13 participates in a covalent cross-link: Glycyl lysine isopeptide (Lys-Gly) (interchain with G-Cter in SUMO2). An SCAN box domain is found at 42–124; the sequence is RRLFRRFRYQ…AAVEALEREP (83 aa). Phosphoserine is present on serine 185. The 71-residue stretch at 221–291 folds into the KRAB domain; the sequence is SPFKDMILCF…ELQDLQGKEV (71 aa). The interval 260–282 is disordered; that stretch reads PPNDLAAQPDLSQGEENEPRVPE. Serine 299 carries the phosphoserine modification. The interval 358 to 399 is disordered; it reads SSSGDEDSQHGPYCTEELGSPTEKQRSLPASHRSSTEAGGEV. Positions 389-399 are enriched in polar residues; sequence HRSSTEAGGEV. Residue lysine 403 forms a Glycyl lysine isopeptide (Lys-Gly) (interchain with G-Cter in SUMO2) linkage. The segment at 406-428 adopts a C2H2-type 1; degenerate zinc-finger fold; sequence YVCPNCGKIFRWRVNFIRHLRSR. C2H2-type zinc fingers lie at residues 435–457 and 463–485; these read HECS…LESH and YRCG…RRIH. The segment at 488–513 is disordered; it reads PDRLQPVEKREQAASEDADKGPKEPL. Lysine 496 is covalently cross-linked (Glycyl lysine isopeptide (Lys-Gly) (interchain with G-Cter in SUMO2)). 2 C2H2-type zinc fingers span residues 522–545 and 553–575; these read FQCC…SHFH and FQCR…ERLH.

The protein belongs to the krueppel C2H2-type zinc-finger protein family. As to quaternary structure, interacts (via zinc-fingers) with JARID2. Interacts with NSD1.

It localises to the nucleus. DNA-binding transcription factor that can both act as an activator and a repressor. The protein is Zinc finger protein 496 (ZNF496) of Homo sapiens (Human).